Here is a 147-residue protein sequence, read N- to C-terminus: Cytochrome c-type biogenesis protein CcmE (147 aa).

At 1–7 (MKPRHKR) the chain is on the cytoplasmic side. The helical; Signal-anchor for type II membrane protein transmembrane segment at 8 to 28 (AAIIAGGLAALGIAAYLVLNA) threads the bilayer. The Periplasmic segment spans residues 29 to 147 (FQSNLVFFFS…QIQKTIKSLK (119 aa)). Heme contacts are provided by H121 and Y125.

It belongs to the CcmE/CycJ family.

It localises to the cell inner membrane. Its function is as follows. Heme chaperone required for the biogenesis of c-type cytochromes. Transiently binds heme delivered by CcmC and transfers the heme to apo-cytochromes in a process facilitated by CcmF and CcmH. The sequence is that of Cytochrome c-type biogenesis protein CcmE from Albidiferax ferrireducens (strain ATCC BAA-621 / DSM 15236 / T118) (Rhodoferax ferrireducens).